Reading from the N-terminus, the 123-residue chain is Large ribosomal subunit protein uL22c (123 aa).

The protein belongs to the universal ribosomal protein uL22 family. In terms of assembly, part of the 50S ribosomal subunit.

Its subcellular location is the plastid. The protein localises to the chloroplast. This protein binds specifically to 23S rRNA. Its function is as follows. The globular domain of the protein is located near the polypeptide exit tunnel on the outside of the subunit, while an extended beta-hairpin is found that lines the wall of the exit tunnel in the center of the 70S ribosome. This Chara vulgaris (Common stonewort) protein is Large ribosomal subunit protein uL22c (rpl22).